Here is a 146-residue protein sequence, read N- to C-terminus: Prostaglandin E synthase 3 (146 aa).

Residues 1-76 (VFIEFCVEDS…ESGQAWPRLT (76 aa)) form the CS domain. The disordered stretch occupies residues 110–146 (SEMMNNMGGDDDVDLPEVDGADDDSPDSDDEKMPDLE). Acidic residues predominate over residues 118-139 (GDDDVDLPEVDGADDDSPDSDD).

It belongs to the p23/wos2 family. As to quaternary structure, binds to telomerase. Binds to the progesterone receptor.

The protein resides in the cytoplasm. The enzyme catalyses prostaglandin H2 = prostaglandin E2. It functions in the pathway lipid metabolism; prostaglandin biosynthesis. In terms of biological role, molecular chaperone. In Gallus gallus (Chicken), this protein is Prostaglandin E synthase 3 (PTGES3).